The following is a 223-amino-acid chain: Ribosomal RNA small subunit methyltransferase G (223 aa).

Residues G90, L95, 141–142 (VE), and R156 each bind S-adenosyl-L-methionine.

The protein belongs to the methyltransferase superfamily. RNA methyltransferase RsmG family.

Its subcellular location is the cytoplasm. The enzyme catalyses guanosine(527) in 16S rRNA + S-adenosyl-L-methionine = N(7)-methylguanosine(527) in 16S rRNA + S-adenosyl-L-homocysteine. In terms of biological role, specifically methylates the N7 position of guanine in position 527 of 16S rRNA. This chain is Ribosomal RNA small subunit methyltransferase G, found in Ralstonia nicotianae (strain ATCC BAA-1114 / GMI1000) (Ralstonia solanacearum).